We begin with the raw amino-acid sequence, 1003 residues long: Rho-associated protein kinase 1 (1003 aa).

Residues 1–28 (VAPVVPDLSSDIDTSNFDDLEEDKGEEE) form a disordered region. The region spanning 1–58 (VAPVVPDLSSDIDTSNFDDLEEDKGEEETFPIPKAFVGNQLPFVGFTYYSNRRYLSSA) is the AGC-kinase C-terminal domain. Residues 16–28 (NFDDLEEDKGEEE) are compositionally biased toward acidic residues. The interaction with FHOD1 stretch occupies residues 17 to 376 (FDDLEEDKGE…KKLKEEREAR (360 aa)). Residues 71–341 (KSLQESLQKT…RLEQEVNEHK (271 aa)) are a coiled coil. Residues 128–205 (STVSQIEKEK…LEEANDLLRT (78 aa)) enclose the REM-1 domain. An N6-acetyllysine modification is found at lysine 296. Residues 356 to 595 (EAKSVAMCEM…TVSRLEEANS (240 aa)) are SHROOM3 binding. Residues 598 to 664 (TKDIEILRRE…LAEIMNRKDF (67 aa)) enclose the RhoBD domain. The segment at 647–659 (LKTQAVNKLAEIM) is RHOA binding. A coiled-coil region spans residues 660 to 751 (NRKDFKIDRK…KLLDLSDSTS (92 aa)). 2 positions are modified to phosphoserine: serine 754 and serine 757. The tract at residues 764–1003 (NLPESRIEGW…VVKNTSGKTR (240 aa)) is auto-inhibitory. The 200-residue stretch at 767–966 (ESRIEGWLSV…WVTHLVKKIP (200 aa)) folds into the PH domain. The Phorbol-ester/DAG-type zinc finger occupies 877-930 (GHEFIPTLYHFPANCDACAKPLWHVFKPPPALECRRCHVKCHRDHLDKKEDLIC). A disordered region spans residues 968–1003 (NPPSGFVRASPRTLSTRSTANQSFRKVVKNTSGKTR). The residue at position 977 (serine 977) is a Phosphoserine. Residues 979–1003 (RTLSTRSTANQSFRKVVKNTSGKTR) show a composition bias toward polar residues.

This sequence belongs to the protein kinase superfamily. AGC Ser/Thr protein kinase family. In terms of assembly, homodimer. Interacts with RHOA (activated by GTP), RHOB, RHOC, GEM, MYLC2B, RHOE, PPP1R12A, LIMK1, LIMK2, TSG101, CHORDC1, DAPK3, PFN1, PTEN and JIP3. Interacts with ITGB1BP1 (via N-terminus and PTB domain). Interacts with FHOD1 in a Src-dependent manner. Interacts with SHROOM3. It depends on Mg(2+) as a cofactor. Autophosphorylated on serine and threonine residues. In terms of processing, cleaved by caspase-3 during apoptosis. This leads to constitutive activation of the kinase and membrane blebbing.

It localises to the cytoplasm. It is found in the cytoskeleton. The protein localises to the microtubule organizing center. The protein resides in the centrosome. Its subcellular location is the centriole. It localises to the golgi apparatus membrane. It is found in the cell projection. The protein localises to the bleb. The protein resides in the cell membrane. Its subcellular location is the lamellipodium. It localises to the ruffle. The enzyme catalyses L-seryl-[protein] + ATP = O-phospho-L-seryl-[protein] + ADP + H(+). It catalyses the reaction L-threonyl-[protein] + ATP = O-phospho-L-threonyl-[protein] + ADP + H(+). Its activity is regulated as follows. Activated by RHOA binding. Inhibited by Y-27632. In terms of biological role, protein kinase which is a key regulator of actin cytoskeleton and cell polarity. Involved in regulation of smooth muscle contraction, actin cytoskeleton organization, stress fiber and focal adhesion formation, neurite retraction, cell adhesion and motility via phosphorylation of DAPK3, GFAP, LIMK1, LIMK2, MYL9/MLC2, TPPP, PFN1 and PPP1R12A. Phosphorylates FHOD1 and acts synergistically with it to promote SRC-dependent non-apoptotic plasma membrane blebbing. Phosphorylates JIP3 and regulates the recruitment of JNK to JIP3 upon UVB-induced stress. Acts as a suppressor of inflammatory cell migration by regulating PTEN phosphorylation and stability. Acts as a negative regulator of VEGF-induced angiogenic endothelial cell activation. Required for centrosome positioning and centrosome-dependent exit from mitosis. Plays a role in terminal erythroid differentiation. May regulate closure of the eyelids and ventral body wall by inducing the assembly of actomyosin bundles. Promotes keratinocyte terminal differentiation. Involved in osteoblast compaction through the fibronectin fibrillogenesis cell-mediated matrix assembly process, essential for osteoblast mineralization. In Pan troglodytes (Chimpanzee), this protein is Rho-associated protein kinase 1 (ROCK1).